A 151-amino-acid chain; its full sequence is Mediator of RNA polymerase II transcription subunit 32 (151 aa).

Residues Gly128 to Gln151 are disordered.

It belongs to the mediator complex subunit 32 family. As to quaternary structure, oligomers. Component of the Mediator complex. Interacts with MED6. Interacts with GEBPL.

It localises to the nucleus. Its function is as follows. Component of the Mediator complex, a coactivator involved in the regulated transcription of nearly all RNA polymerase II-dependent genes. Mediator functions as a bridge to convey information from gene-specific regulatory proteins to the basal RNA polymerase II transcription machinery. The Mediator complex, having a compact conformation in its free form, is recruited to promoters by direct interactions with regulatory proteins and serves for the assembly of a functional pre-initiation complex with RNA polymerase II and the general transcription factors. In Arabidopsis thaliana (Mouse-ear cress), this protein is Mediator of RNA polymerase II transcription subunit 32 (MED32).